We begin with the raw amino-acid sequence, 123 residues long: Putative iron-sulfur cluster insertion protein ErpA (123 aa).

Positions 51, 115, and 117 each coordinate iron-sulfur cluster.

The protein belongs to the HesB/IscA family. Homodimer. The cofactor is iron-sulfur cluster.

Functionally, required for insertion of 4Fe-4S clusters. This chain is Putative iron-sulfur cluster insertion protein ErpA, found in Bordetella bronchiseptica (strain ATCC BAA-588 / NCTC 13252 / RB50) (Alcaligenes bronchisepticus).